The following is a 243-amino-acid chain: MNCAASVSVIMPAAGSGQRFGSQSNKLFAHLDGKPLWQHAIDRFQHRGDVRQIVLAVSEEDESRFREQIAAISSAVPIHLVRGGATRSESVGAALEQVKRFAAESAAANASTQTLVAIHDAARPLVRQSDLDRVIAKAAETGAAILAAPVSGTLKRATGDGSETVDRRNTYVALTPQVFAIDVICQAYARDRGRMATDDAQLVERTSHPVQLVTGSADNLKITFPEDLRIAEAILNECRSEFV.

It belongs to the IspD/TarI cytidylyltransferase family. IspD subfamily.

It catalyses the reaction 2-C-methyl-D-erythritol 4-phosphate + CTP + H(+) = 4-CDP-2-C-methyl-D-erythritol + diphosphate. It participates in isoprenoid biosynthesis; isopentenyl diphosphate biosynthesis via DXP pathway; isopentenyl diphosphate from 1-deoxy-D-xylulose 5-phosphate: step 2/6. Its function is as follows. Catalyzes the formation of 4-diphosphocytidyl-2-C-methyl-D-erythritol from CTP and 2-C-methyl-D-erythritol 4-phosphate (MEP). This is 2-C-methyl-D-erythritol 4-phosphate cytidylyltransferase from Rhodopirellula baltica (strain DSM 10527 / NCIMB 13988 / SH1).